The primary structure comprises 484 residues: Cysteine--tRNA ligase (484 aa).

Zn(2+) is bound at residue Cys29. Positions 31 to 41 (PTVQSAPHIGH) match the 'HIGH' region motif. 3 residues coordinate Zn(2+): Cys219, His244, and Glu248. A 'KMSKS' region motif is present at residues 275–279 (KMSKS). Lys278 is a binding site for ATP.

The protein belongs to the class-I aminoacyl-tRNA synthetase family. As to quaternary structure, monomer. Requires Zn(2+) as cofactor.

It is found in the cytoplasm. It carries out the reaction tRNA(Cys) + L-cysteine + ATP = L-cysteinyl-tRNA(Cys) + AMP + diphosphate. In Clavibacter sepedonicus (Clavibacter michiganensis subsp. sepedonicus), this protein is Cysteine--tRNA ligase.